A 476-amino-acid polypeptide reads, in one-letter code: Cobyric acid synthase (476 aa).

Residues 242 to 428 (AFRVVVPVPP…LHGLFDTPDA (187 aa)) form the GATase cobBQ-type domain. The Nucleophile role is filled by Cys323. His420 is an active-site residue.

The protein belongs to the CobB/CobQ family. CobQ subfamily.

It participates in cofactor biosynthesis; adenosylcobalamin biosynthesis. Functionally, catalyzes amidations at positions B, D, E, and G on adenosylcobyrinic A,C-diamide. NH(2) groups are provided by glutamine, and one molecule of ATP is hydrogenolyzed for each amidation. This chain is Cobyric acid synthase, found in Janthinobacterium sp. (strain Marseille) (Minibacterium massiliensis).